Consider the following 317-residue polypeptide: Small ribosomal subunit protein uS2 (317 aa).

At S2 the chain carries N-acetylserine. Laminin-binding stretches follow at residues 161 to 180 (IPCNNKGHHSVGLMWWMLSR) and 205 to 229 (RDPEEIEKEEQAAAEKAVGKEEFQG). [DE]-W-[ST] repeat units lie at residues 230–232 (EWT) and 245–247 (DWS). The interval 242–317 (EVADWSEGVA…EWGGASADWS (76 aa)) is laminin-binding. The segment covering 271–284 (EAAAPSKAPAAAEG) has biased composition (low complexity). The interval 271 to 317 (EAAAPSKAPAAAEGFAEDWSAQPATEDWSAAPTAQATEWGGASADWS) is disordered. 3 [DE]-W-[ST] repeats span residues 288–290 (DWS), 297–299 (DWS), and 315–317 (DWS).

It belongs to the universal ribosomal protein uS2 family. Monomer (37LRP) and homodimer (67LR). Component of the small ribosomal subunit. Mature ribosomes consist of a small (40S) and a large (60S) subunit. The 40S subunit contains about 33 different proteins and 1 molecule of RNA (18S). The 60S subunit contains about 49 different proteins and 3 molecules of RNA (28S, 5.8S and 5S). Interacts with rps21. Interacts with several laminins including at least lamb1. Interacts with mdk. In terms of processing, acylated. Acylation may be a prerequisite for conversion of the monomeric 37 kDa laminin receptor precursor (37LRP) to the mature dimeric 67 kDa laminin receptor (67LR), and may provide a mechanism for membrane association. Cleaved by stromelysin-3 (ST3) at the cell surface. Cleavage by stromelysin-3 may be a mechanism to alter cell-extracellular matrix interactions.

Its subcellular location is the cell membrane. It is found in the cytoplasm. The protein localises to the nucleus. Functionally, required for the assembly and/or stability of the 40S ribosomal subunit. Required for the processing of the 20S rRNA-precursor to mature 18S rRNA in a late step of the maturation of 40S ribosomal subunits. Also functions as a cell surface receptor for laminin. Plays a role in cell adhesion to the basement membrane and in the consequent activation of signaling transduction pathways. May play a role in cell fate determination and tissue morphogenesis. This is Small ribosomal subunit protein uS2 (rpsa) from Salmo salar (Atlantic salmon).